Consider the following 163-residue polypeptide: Cyclic pyranopterin monophosphate synthase (163 aa).

Residues 75 to 77 and 115 to 116 contribute to the substrate site; these read MCH and ME. D130 is an active-site residue.

This sequence belongs to the MoaC family. In terms of assembly, homohexamer; trimer of dimers.

The enzyme catalyses (8S)-3',8-cyclo-7,8-dihydroguanosine 5'-triphosphate = cyclic pyranopterin phosphate + diphosphate. Its pathway is cofactor biosynthesis; molybdopterin biosynthesis. Catalyzes the conversion of (8S)-3',8-cyclo-7,8-dihydroguanosine 5'-triphosphate to cyclic pyranopterin monophosphate (cPMP). The polypeptide is Cyclic pyranopterin monophosphate synthase (Bacillus pumilus (strain SAFR-032)).